Consider the following 1516-residue polypeptide: Receptor-type tyrosine-protein phosphatase S (1516 aa).

The N-terminal stretch at 1–28 (MRILPSPGMPALLSLVSLLSVLLMGCVA) is a signal peptide. The Extracellular portion of the chain corresponds to 29 to 854 (ESPPVFIKKP…PQPIIDGEEG (826 aa)). Ig-like C2-type domains lie at 32–122 (PVFI…AKLT), 134–223 (PNID…ANLY), and 235–317 (PRFS…AQIT). 2 disulfide bridges follow: Cys53-Cys106 and Cys155-Cys206. The segment at 67–71 (KKGKK) is important for binding to glycosaminoglycan chains. Residues Asn253 and Asn298 are each glycosylated (N-linked (GlcNAc...) asparagine). Cys256 and Cys301 are disulfide-bonded. 4 Fibronectin type-III domains span residues 324-414 (APGT…TGEQ), 419-513 (APRN…TQQG), 517-606 (QPMN…TLQS), and 608-692 (LPKN…TAAN). Residues 855-875 (LIWVIGPVLAVVFIICIVIAI) form a helical membrane-spanning segment. Topologically, residues 876-1516 (LLYKNKRKDS…YLGSFDHYAT (641 aa)) are cytoplasmic. Tyrosine-protein phosphatase domains lie at 961-1216 (LSQE…LLEA) and 1248-1507 (MELE…ALEY). Catalysis depends on phosphocysteine intermediate residues Cys1157 and Cys1448.

It belongs to the protein-tyrosine phosphatase family. Receptor class 2A subfamily. Homodimer. Binding to large heparan sulfate proteoglycan structures promotes oligomerization. Binding to chondroitin sulfate proteoglycan does not lead to oligomerization. Interacts (via Ig-like domains) with NTRK1 and NTRK3, but does not form detectable complexes with NTRK2. Interacts (via extracellular domain) with the heparan sulfate proteoglycans AGRN and COL18A1. Post-translationally, a cleavage occurs, separating the extracellular domain from the transmembrane segment. This process called 'ectodomain shedding' is thought to be involved in receptor desensitization, signal transduction and/or membrane localization. Detected in embryonic brain, dorsal root ganglion and spinal cord. Detected in embryonic retina (at protein level). Detected in embryonic brain, spinal cord, dorsal root ganglion, trigeminal ganglion, ganglia associated with the precardinal vein and vagus nerve, the inner and outer nuclear layer of the retina, limb, breast muscle, heart, gut and lung.

Its subcellular location is the cell membrane. The protein localises to the cell projection. The protein resides in the axon. It is found in the perikaryon. It localises to the cytoplasmic vesicle. Its subcellular location is the secretory vesicle. The protein localises to the synaptic vesicle membrane. The protein resides in the synapse. It is found in the synaptosome. It localises to the postsynaptic density. Its subcellular location is the neuron projection. The protein localises to the growth cone. It carries out the reaction O-phospho-L-tyrosyl-[protein] + H2O = L-tyrosyl-[protein] + phosphate. Functionally, cell surface receptor that binds to glycosaminoglycans, including chondroitin sulfate proteoglycans and heparan sulfate proteoglycans. Binding to chondroitin sulfate and heparan sulfate proteoglycans has opposite effects on PTPRS oligomerization and regulation of neurite outgrowth. Contributes to the inhibition of neurite and axonal outgrowth by chondroitin sulfate proteoglycans, also after nerve transection. Plays a role in stimulating neurite outgrowth in response to the heparan sulfate proteoglycan GPC2. Required for normal brain development, especially for normal development of the pituitary gland and the olfactory bulb. Functions as tyrosine phosphatase. Mediates dephosphorylation of NTRK1, NTRK2 and NTRK3. Plays a role in down-regulation of signaling cascades that lead to the activation of Akt and MAP kinases. Down-regulates TLR9-mediated activation of NF-kappa-B, as well as production of TNF, interferon alpha and interferon beta. This chain is Receptor-type tyrosine-protein phosphatase S (PTPRS), found in Gallus gallus (Chicken).